Reading from the N-terminus, the 320-residue chain is Cytochrome f (320 aa).

The first 35 residues, 1-35 (MENRNTFSWVKEQMTRSISVSIMIYVITRTSISNA), serve as a signal peptide directing secretion. Residues Tyr-36, Cys-56, Cys-59, and His-60 each contribute to the heme site. A helical membrane pass occupies residues 286-306 (VQGLLFFFASVILAQVFLVLK).

The protein belongs to the cytochrome f family. The 4 large subunits of the cytochrome b6-f complex are cytochrome b6, subunit IV (17 kDa polypeptide, petD), cytochrome f and the Rieske protein, while the 4 small subunits are PetG, PetL, PetM and PetN. The complex functions as a dimer. The cofactor is heme.

It localises to the plastid. The protein localises to the chloroplast thylakoid membrane. Component of the cytochrome b6-f complex, which mediates electron transfer between photosystem II (PSII) and photosystem I (PSI), cyclic electron flow around PSI, and state transitions. In Oryza nivara (Indian wild rice), this protein is Cytochrome f.